Here is a 338-residue protein sequence, read N- to C-terminus: Sulfotransferase 2B1 (338 aa).

Residue 67-72 coordinates 3'-phosphoadenylyl sulfate; sequence KSGTNW. Residues Trp-95 and Trp-100 each coordinate substrate. Catalysis depends on His-122, which acts as the Proton acceptor. 3'-phosphoadenylyl sulfate-binding positions include Arg-144, Ser-152, Tyr-207, 241–246, and 271–273; these read SAFAAM and RKG. A disordered region spans residues 301–338; it reads VQRFPWDTSEEDSSPDGQPDPEPSPSPASDDPNPGSSQ. Low complexity predominate over residues 327–338; that stretch reads PASDDPNPGSSQ.

Belongs to the sulfotransferase 1 family. Expressed at high levels in epididymis, intestine and uterus, and low levels in brain and hypothalamus. Isoform 2 is most prominent in the brain and spinal cord, with modest expression in the lung, skin and spleen. Isoform 1 is most prominently expressed in skin and small intestine, with modest expression in muscle and prostate.

It localises to the cytoplasm. Its subcellular location is the cytosol. It is found in the microsome. The protein resides in the nucleus. The enzyme catalyses an alcohol + 3'-phosphoadenylyl sulfate = an alkyl sulfate + adenosine 3',5'-bisphosphate + H(+). The catalysed reaction is pregnenolone + 3'-phosphoadenylyl sulfate = pregnenolone sulfate + adenosine 3',5'-bisphosphate + H(+). It carries out the reaction 3beta-hydroxyandrost-5-en-17-one + 3'-phosphoadenylyl sulfate = dehydroepiandrosterone 3-sulfate + adenosine 3',5'-bisphosphate + H(+). It catalyses the reaction cholesterol + 3'-phosphoadenylyl sulfate = cholesterol sulfate + adenosine 3',5'-bisphosphate + H(+). Functionally, sulfotransferase that utilizes 3'-phospho-5'-adenylyl sulfate (PAPS) as sulfonate donor to catalyze the sulfate conjugation. Preferentially sulfonates cholesterol. Catalyzes sulfation of the 3beta-hydroxyl groups of steroids, such as, pregnenolone and dehydroepiandrosterone (DHEA). Cholesterol sulfation is approximately 10-fold higher than for pregnenolone and 20-fold higher than for DHEA. Plays a role in epidermal cholesterol metabolism and in the regulation of epidermal proliferation and differentiation. Its function is as follows. Strongly sulfonates pregnenolone, however is capable to sulfonate cholesterol with a high degree of efficiency. DHEA is a relatively poor substrate. This is Sulfotransferase 2B1 (Sult2b1) from Mus musculus (Mouse).